Consider the following 245-residue polypeptide: Thiopurine S-methyltransferase (245 aa).

29 to 40 (WQEKWVNHKTGF) serves as a coordination point for S-adenosyl-L-methionine. Residue Phe40 coordinates substrate. Lys58 is modified (N6-acetyllysine). S-adenosyl-L-methionine is bound by residues Leu69, Glu90, and Arg152.

The protein belongs to the class I-like SAM-binding methyltransferase superfamily. TPMT family. In terms of assembly, monomer.

The protein localises to the cytoplasm. The enzyme catalyses S-adenosyl-L-methionine + a thiopurine = S-adenosyl-L-homocysteine + a thiopurine S-methylether.. The chain is Thiopurine S-methyltransferase (TPMT) from Bos taurus (Bovine).